The sequence spans 168 residues: Peptide methionine sulfoxide reductase 2 (168 aa).

The MsrB domain maps to Asp40–Asp168. Zn(2+) contacts are provided by Cys79, Cys82, Cys128, and Cys131. A disulfide bond links Cys97 and Cys157. The active-site Nucleophile is the Cys157.

The protein belongs to the MsrB Met sulfoxide reductase family. Zn(2+) serves as cofactor.

The catalysed reaction is L-methionyl-[protein] + [thioredoxin]-disulfide + H2O = L-methionyl-(R)-S-oxide-[protein] + [thioredoxin]-dithiol. Functionally, methionine-R-sulfoxide reductase which catalyzes the reduction of methionine sulfoxide (MetSO) to methionine in proteins. Plays a protective role against oxidative stress by restoring activity to proteins that have been inactivated by methionine oxidation. Protects iron-sulfur clusters from oxidative inactivation along with MXR1. Involved in the regulation of lifespan. This chain is Peptide methionine sulfoxide reductase 2 (MXR2), found in Saccharomyces cerevisiae (strain ATCC 204508 / S288c) (Baker's yeast).